A 180-amino-acid chain; its full sequence is Protein SPMIP9 (180 aa).

As to quaternary structure, microtubule inner protein component of sperm flagellar doublet microtubules. Only detected after the mouse is 35 days old. Expression increases gradually from day 35 to 6 months, and remains stable after 54 days. Exclusively expressed in the epididymis and testis.

It is found in the nucleus. The protein localises to the cytoplasm. It localises to the cytoskeleton. The protein resides in the flagellum axoneme. In terms of biological role, microtubule inner protein (MIP) part of the dynein-decorated doublet microtubules (DMTs) in flagella axoneme. This Mus musculus (Mouse) protein is Protein SPMIP9 (Spmip9).